A 386-amino-acid polypeptide reads, in one-letter code: S-adenosylmethionine synthase (386 aa).

His-16 serves as a coordination point for ATP. Residue Asp-18 participates in Mg(2+) binding. Glu-44 contributes to the K(+) binding site. L-methionine contacts are provided by Glu-57 and Gln-100. The flexible loop stretch occupies residues Gln-100–Gln-110. Residues Asp-164 to Lys-166, Arg-231 to Phe-232, Asp-240, Arg-246 to Lys-247, Ala-263, and Lys-267 each bind ATP. Residue Asp-240 participates in L-methionine binding. Lys-271 contacts L-methionine.

This sequence belongs to the AdoMet synthase family. In terms of assembly, homotetramer; dimer of dimers. It depends on Mg(2+) as a cofactor. The cofactor is K(+).

The protein resides in the cytoplasm. The enzyme catalyses L-methionine + ATP + H2O = S-adenosyl-L-methionine + phosphate + diphosphate. It participates in amino-acid biosynthesis; S-adenosyl-L-methionine biosynthesis; S-adenosyl-L-methionine from L-methionine: step 1/1. Catalyzes the formation of S-adenosylmethionine (AdoMet) from methionine and ATP. The overall synthetic reaction is composed of two sequential steps, AdoMet formation and the subsequent tripolyphosphate hydrolysis which occurs prior to release of AdoMet from the enzyme. The sequence is that of S-adenosylmethionine synthase from Sulfurovum sp. (strain NBC37-1).